Reading from the N-terminus, the 654-residue chain is Beta-galactosidase-1-like protein (654 aa).

A signal peptide spans 1–27 (MAPKKPSCLRSLLLPLSLTLLLPQADT). A glycan (N-linked (GlcNAc...) asparagine) is linked at asparagine 97. Catalysis depends on glutamate 186, which acts as the Proton donor. An N-linked (GlcNAc...) asparagine glycan is attached at asparagine 243. The Nucleophile role is filled by glutamate 264.

This sequence belongs to the glycosyl hydrolase 35 family.

The protein localises to the secreted. Its function is as follows. Probable glycosyl hydrolase. This chain is Beta-galactosidase-1-like protein (GLB1L), found in Macaca fascicularis (Crab-eating macaque).